We begin with the raw amino-acid sequence, 383 residues long: N-acetyldiaminopimelate deacetylase (383 aa).

Residue Asp75 is part of the active site. Glu134 acts as the Proton acceptor in catalysis.

This sequence belongs to the peptidase M20A family. N-acetyldiaminopimelate deacetylase subfamily.

It carries out the reaction N-acetyl-(2S,6S)-2,6-diaminopimelate + H2O = (2S,6S)-2,6-diaminopimelate + acetate. Its pathway is amino-acid biosynthesis; L-lysine biosynthesis via DAP pathway; LL-2,6-diaminopimelate from (S)-tetrahydrodipicolinate (acetylase route): step 3/3. Functionally, catalyzes the conversion of N-acetyl-diaminopimelate to diaminopimelate and acetate. The chain is N-acetyldiaminopimelate deacetylase from Lactobacillus acidophilus (strain ATCC 700396 / NCK56 / N2 / NCFM).